A 647-amino-acid chain; its full sequence is LIM domain kinase 1 (647 aa).

LIM zinc-binding domains are found at residues 25–75 and 84–137; these read CASC…CKKD and CHGC…CGHC. Positions 165 to 258 constitute a PDZ domain; sequence LVSIPASSHG…LLQLTLEHDP (94 aa). Position 210 is a phosphoserine (Ser-210). Residue Thr-229 is modified to Phosphothreonine. The interval 260-319 is disordered; it reads DTLGHGLGPETSPLSSPAYTPSGEAGSSARQKPVLRSCSIDRSPGAGSLGSPASQRKDLG. A phosphoserine mark is found at Ser-298, Ser-302, Ser-307, and Ser-310. Low complexity predominate over residues 302-313; the sequence is SPGAGSLGSPAS. Residue Ser-323 is modified to Phosphoserine; by MAPKAPK2. Residue Ser-337 is modified to Phosphoserine. The Protein kinase domain maps to 339–604; sequence LIHGEVLGKG…PSFVKLEHWL (266 aa). ATP-binding positions include 345-353 and Lys-368; that span reads LGKGCFGQA. Asp-460 is an active-site residue. Thr-508 bears the Phosphothreonine; by ROCK1 and PAK1 mark.

It belongs to the protein kinase superfamily. TKL Ser/Thr protein kinase family. As to quaternary structure, interacts (via LIM domain) with the cytoplasmic domain of NRG1. Interacts with NISCH. Interacts with RLIM and RNF6. Self-associates to form homodimers. Interacts with HSP90AA1; this interaction promotes LIMK1 dimerization and subsequent transphosphorylation. Interacts with CDKN1C. Interacts with SSH1. Interacts with ROCK1. Interacts (via LIM zinc-binding domains) with FAM89B/LRAP25 (via LRR repeat). Forms a tripartite complex with CDC42BPA, CDC42BPB and FAM89B/LRAP25. Autophosphorylated. Phosphorylated on Thr-508 by ROCK1 and PAK1, resulting in activation. Phosphorylated by PAK4 which increases the ability of LIMK1 to phosphorylate cofilin. Phosphorylated at Ser-323 by MAPKAPK2 during activation of VEGFA-induced signaling, which results in activation of LIMK1 and promotion of actin reorganization, cell migration, and tubule formation of endothelial cells. Dephosphorylated and inactivated by SSH1. Phosphorylated by CDC42BP. In terms of processing, ubiquitinated. 'Lys-48'-linked polyubiquitination by RNF6 leads to proteasomal degradation through the 26S proteasome, modulating LIMK1 levels in the growth cone and its effect on axonal outgrowth. Also polyubiquitinated by RLIM. As to expression, highest expression in both adult and fetal nervous system. Detected ubiquitously throughout the different regions of adult brain, with highest levels in the cerebral cortex. Expressed to a lesser extent in heart and skeletal muscle.

Its subcellular location is the cytoplasm. The protein resides in the nucleus. The protein localises to the cytoskeleton. It is found in the cell projection. It localises to the lamellipodium. It carries out the reaction L-seryl-[protein] + ATP = O-phospho-L-seryl-[protein] + ADP + H(+). The catalysed reaction is L-threonyl-[protein] + ATP = O-phospho-L-threonyl-[protein] + ADP + H(+). In terms of biological role, serine/threonine-protein kinase that plays an essential role in the regulation of actin filament dynamics. Acts downstream of several Rho family GTPase signal transduction pathways. Activated by upstream kinases including ROCK1, PAK1 and PAK4, which phosphorylate LIMK1 on a threonine residue located in its activation loop. LIMK1 subsequently phosphorylates and inactivates the actin binding/depolymerizing factors cofilin-1/CFL1, cofilin-2/CFL2 and destrin/DSTN, thereby preventing the cleavage of filamentous actin (F-actin), and stabilizing the actin cytoskeleton. In this way LIMK1 regulates several actin-dependent biological processes including cell motility, cell cycle progression, and differentiation. Phosphorylates TPPP on serine residues, thereby promoting microtubule disassembly. Stimulates axonal outgrowth and may be involved in brain development. Functionally, has a dominant negative effect on actin cytoskeletal changes. Required for atypical chemokine receptor ACKR2-induced phosphorylation of cofilin (CFL1). The chain is LIM domain kinase 1 (LIMK1) from Homo sapiens (Human).